Here is a 668-residue protein sequence, read N- to C-terminus: DNA ligase (668 aa).

NAD(+)-binding positions include Asp-37–Asp-41, Ser-86–Met-87, and Glu-116. Lys-118 acts as the N6-AMP-lysine intermediate in catalysis. Residues Arg-139, Glu-173, Lys-288, and Lys-312 each contribute to the NAD(+) site. Positions 406, 409, 424, and 429 each coordinate Zn(2+). Residues Ala-590–Lys-668 form the BRCT domain.

It belongs to the NAD-dependent DNA ligase family. LigA subfamily. Mg(2+) is required as a cofactor. Requires Mn(2+) as cofactor.

It catalyses the reaction NAD(+) + (deoxyribonucleotide)n-3'-hydroxyl + 5'-phospho-(deoxyribonucleotide)m = (deoxyribonucleotide)n+m + AMP + beta-nicotinamide D-nucleotide.. In terms of biological role, DNA ligase that catalyzes the formation of phosphodiester linkages between 5'-phosphoryl and 3'-hydroxyl groups in double-stranded DNA using NAD as a coenzyme and as the energy source for the reaction. It is essential for DNA replication and repair of damaged DNA. The sequence is that of DNA ligase from Lactobacillus johnsonii (strain CNCM I-12250 / La1 / NCC 533).